Reading from the N-terminus, the 313-residue chain is Carbamate kinase 2 (313 aa).

Belongs to the carbamate kinase family.

The protein localises to the cytoplasm. It carries out the reaction hydrogencarbonate + NH4(+) + ATP = carbamoyl phosphate + ADP + H2O + H(+). Its pathway is metabolic intermediate metabolism; carbamoyl phosphate degradation; CO(2) and NH(3) from carbamoyl phosphate: step 1/1. The polypeptide is Carbamate kinase 2 (arcC2) (Staphylococcus aureus (strain bovine RF122 / ET3-1)).